A 515-amino-acid chain; its full sequence is 1-pyrroline-5-carboxylate dehydrogenase (515 aa).

Residues Glu-286 and Cys-320 contribute to the active site.

The protein belongs to the aldehyde dehydrogenase family. RocA subfamily.

It carries out the reaction L-glutamate 5-semialdehyde + NAD(+) + H2O = L-glutamate + NADH + 2 H(+). The protein operates within amino-acid degradation; L-proline degradation into L-glutamate; L-glutamate from L-proline: step 2/2. The polypeptide is 1-pyrroline-5-carboxylate dehydrogenase (Oceanobacillus iheyensis (strain DSM 14371 / CIP 107618 / JCM 11309 / KCTC 3954 / HTE831)).